The following is a 550-amino-acid chain: CTP synthase (550 aa).

Positions 1 to 270 (MTKFVFVTGG…DRLICEELRL (270 aa)) are amidoligase domain. A CTP-binding site is contributed by Ser13. Ser13 contributes to the UTP binding site. ATP contacts are provided by residues 14-19 (SLGKGI) and Asp71. Positions 71 and 144 each coordinate Mg(2+). Residues 151–153 (DIE), 191–196 (KTKPTQ), and Lys227 each bind CTP. UTP-binding positions include 191–196 (KTKPTQ) and Lys227. The region spanning 295–547 (TIGMVGKYVD…VEAALASQQR (253 aa)) is the Glutamine amidotransferase type-1 domain. Gly356 contributes to the L-glutamine binding site. The active-site Nucleophile; for glutamine hydrolysis is the Cys383. Residues 384 to 387 (LGMQ), Glu407, and Arg473 each bind L-glutamine. Catalysis depends on residues His520 and Glu522.

The protein belongs to the CTP synthase family. Homotetramer.

It carries out the reaction UTP + L-glutamine + ATP + H2O = CTP + L-glutamate + ADP + phosphate + 2 H(+). The enzyme catalyses L-glutamine + H2O = L-glutamate + NH4(+). It catalyses the reaction UTP + NH4(+) + ATP = CTP + ADP + phosphate + 2 H(+). It functions in the pathway pyrimidine metabolism; CTP biosynthesis via de novo pathway; CTP from UDP: step 2/2. Its activity is regulated as follows. Allosterically activated by GTP, when glutamine is the substrate; GTP has no effect on the reaction when ammonia is the substrate. The allosteric effector GTP functions by stabilizing the protein conformation that binds the tetrahedral intermediate(s) formed during glutamine hydrolysis. Inhibited by the product CTP, via allosteric rather than competitive inhibition. Catalyzes the ATP-dependent amination of UTP to CTP with either L-glutamine or ammonia as the source of nitrogen. Regulates intracellular CTP levels through interactions with the four ribonucleotide triphosphates. This Cupriavidus taiwanensis (strain DSM 17343 / BCRC 17206 / CCUG 44338 / CIP 107171 / LMG 19424 / R1) (Ralstonia taiwanensis (strain LMG 19424)) protein is CTP synthase.